Here is a 113-residue protein sequence, read N- to C-terminus: UPF0145 protein TK1926 (113 aa).

Belongs to the UPF0145 family.

This Thermococcus kodakarensis (strain ATCC BAA-918 / JCM 12380 / KOD1) (Pyrococcus kodakaraensis (strain KOD1)) protein is UPF0145 protein TK1926.